The following is a 429-amino-acid chain: 3-phosphoshikimate 1-carboxyvinyltransferase (429 aa).

3-phosphoshikimate contacts are provided by lysine 11, serine 12, and arginine 16. Lysine 11 provides a ligand contact to phosphoenolpyruvate. 2 residues coordinate phosphoenolpyruvate: glycine 82 and arginine 110. Residues serine 155, glutamine 157, aspartate 302, and lysine 329 each coordinate 3-phosphoshikimate. Glutamine 157 contacts phosphoenolpyruvate. The active-site Proton acceptor is aspartate 302. Arginine 333 and arginine 385 together coordinate phosphoenolpyruvate.

Belongs to the EPSP synthase family. In terms of assembly, monomer.

It is found in the cytoplasm. It catalyses the reaction 3-phosphoshikimate + phosphoenolpyruvate = 5-O-(1-carboxyvinyl)-3-phosphoshikimate + phosphate. The protein operates within metabolic intermediate biosynthesis; chorismate biosynthesis; chorismate from D-erythrose 4-phosphate and phosphoenolpyruvate: step 6/7. Functionally, catalyzes the transfer of the enolpyruvyl moiety of phosphoenolpyruvate (PEP) to the 5-hydroxyl of shikimate-3-phosphate (S3P) to produce enolpyruvyl shikimate-3-phosphate and inorganic phosphate. The polypeptide is 3-phosphoshikimate 1-carboxyvinyltransferase (Helicobacter pylori (strain G27)).